A 701-amino-acid polypeptide reads, in one-letter code: Elongation factor G (701 aa).

Residues Lys6–Leu286 form the tr-type G domain. GTP contacts are provided by residues Ala15 to Thr22, Asp83 to His87, and Asn137 to Asp140.

The protein belongs to the TRAFAC class translation factor GTPase superfamily. Classic translation factor GTPase family. EF-G/EF-2 subfamily.

It localises to the cytoplasm. Its function is as follows. Catalyzes the GTP-dependent ribosomal translocation step during translation elongation. During this step, the ribosome changes from the pre-translocational (PRE) to the post-translocational (POST) state as the newly formed A-site-bound peptidyl-tRNA and P-site-bound deacylated tRNA move to the P and E sites, respectively. Catalyzes the coordinated movement of the two tRNA molecules, the mRNA and conformational changes in the ribosome. The polypeptide is Elongation factor G (Cytophaga hutchinsonii (strain ATCC 33406 / DSM 1761 / CIP 103989 / NBRC 15051 / NCIMB 9469 / D465)).